Consider the following 367-residue polypeptide: Alginate lyase (367 aa).

Residues 1-27 (MKTSHLIRIALPGALAAALLASQVSQA) form the signal peptide. Residues 65 to 66 (SK), 138 to 139 (HT), and Tyr-256 each bind substrate.

The protein belongs to the polysaccharide lyase 5 family.

Its subcellular location is the periplasm. The enzyme catalyses Eliminative cleavage of alginate to give oligosaccharides with 4-deoxy-alpha-L-erythro-hex-4-enuronosyl groups at their non-reducing ends and beta-D-mannuronate at their reducing end.. Catalyzes the depolymerization of alginate by cleaving the beta-1,4 glycosidic bond between two adjacent sugar residues via a beta-elimination mechanism. May serve to degrade mislocalized alginate that is trapped in the periplasmic space. The protein is Alginate lyase of Pseudomonas aeruginosa (strain LESB58).